Here is a 195-residue protein sequence, read N- to C-terminus: Cytochrome c oxidase assembly protein CtaG (195 aa).

Residues 1-9 are Cytoplasmic-facing; it reads MALNGPQKT. Residues 10–30 traverse the membrane as a helical; Signal-anchor for type II membrane protein segment; sequence VVQLVGVVVLMGGLAWASVPF. Residues 31 to 195 lie on the Periplasmic side of the membrane; that stretch reads YDWFCRVTGF…DTSGAETELN (165 aa).

It belongs to the COX11/CtaG family.

The protein resides in the cell inner membrane. Its function is as follows. Exerts its effect at some terminal stage of cytochrome c oxidase synthesis, probably by being involved in the insertion of the copper B into subunit I. This is Cytochrome c oxidase assembly protein CtaG from Ruegeria sp. (strain TM1040) (Silicibacter sp.).